The following is a 377-amino-acid chain: Opsin-2 (377 aa).

Residues 1–57 (MNNQSENYYHGAQFEALKSAGAIEMLGDGLTGDDLAAIPEHWLSYPAPPASAHTALA) are Extracellular-facing. N3 carries an N-linked (GlcNAc...) asparagine glycan. The chain crosses the membrane as a helical span at residues 58–78 (LLYIFFTFAALVGNGMVIFIF). The Cytoplasmic portion of the chain corresponds to 79–89 (STTKSLRTSSN). Residues 90–110 (FLVLNLAILDFIMMAKAPIFI) form a helical membrane-spanning segment. Over 111 to 126 (YNSAMRGFAVGTVGCQ) the chain is Extracellular. Cysteines 125 and 202 form a disulfide. A helical transmembrane segment spans residues 127-146 (IFALMGAYSGIGAGMTNACI). Residues 147–166 (AYDRHSTITRPLDGRLSEGK) are Cytoplasmic-facing. Residues 167-187 (VLLMVAFVWIYSTPWALLPLL) form a helical membrane-spanning segment. Topologically, residues 188–214 (KIWGRYVPEGYLTSCSFDYLTNTFDTK) are extracellular. The helical transmembrane segment at 215–235 (LFVACIFTCSYVFPMSLIIYF) threads the bilayer. The Cytoplasmic segment spans residues 236 to 283 (YSGIVKQVFAHEAALREQAKKMNVESLRANQGGSSESAEIRIAKAALT). Residues 284–304 (VCFLFVASWTPYGVMALIGAF) form a helical membrane-spanning segment. Residues 305 to 314 (GNQQLLTPGV) lie on the Extracellular side of the membrane. The helical transmembrane segment at 315–335 (TMIPAVACKAVACISPWVYAI) threads the bilayer. Over 336–377 (RHPMYRQELQRRMPWLQIDEPDDTVSTATSNTTNSAPPAATA) the chain is Cytoplasmic. Residues 355 to 377 (EPDDTVSTATSNTTNSAPPAATA) are disordered. The span at 361–377 (STATSNTTNSAPPAATA) shows a compositional bias: low complexity.

It belongs to the G-protein coupled receptor 1 family. Opsin subfamily. As to expression, in the retina, expression is essentially uniformly distributed, but a higher level is seen in the dorsal region of the retina and in the dorsal rim retinulae.

The protein localises to the membrane. Its function is as follows. Visual pigments are the light-absorbing molecules that mediate vision. They consist of an apoprotein, opsin, covalently linked to cis-retinal. May play a role in photoperiodic photoreception. This Manduca sexta (Tobacco hawkmoth) protein is Opsin-2 (OP2).